A 428-amino-acid chain; its full sequence is Enolase (428 aa).

Residue glutamine 163 participates in (2R)-2-phosphoglycerate binding. Glutamate 205 acts as the Proton donor in catalysis. Mg(2+) contacts are provided by aspartate 242, glutamate 285, and aspartate 312. Lysine 337, arginine 366, serine 367, and lysine 388 together coordinate (2R)-2-phosphoglycerate. The Proton acceptor role is filled by lysine 337.

The protein belongs to the enolase family. The cofactor is Mg(2+).

The protein resides in the cytoplasm. It localises to the secreted. It is found in the cell surface. It catalyses the reaction (2R)-2-phosphoglycerate = phosphoenolpyruvate + H2O. Its pathway is carbohydrate degradation; glycolysis; pyruvate from D-glyceraldehyde 3-phosphate: step 4/5. Functionally, catalyzes the reversible conversion of 2-phosphoglycerate (2-PG) into phosphoenolpyruvate (PEP). It is essential for the degradation of carbohydrates via glycolysis. This Neisseria meningitidis serogroup C (strain 053442) protein is Enolase.